Here is an 86-residue protein sequence, read N- to C-terminus: Small ribosomal subunit protein bS20 (86 aa).

Belongs to the bacterial ribosomal protein bS20 family.

Its function is as follows. Binds directly to 16S ribosomal RNA. The protein is Small ribosomal subunit protein bS20 of Novosphingobium aromaticivorans (strain ATCC 700278 / DSM 12444 / CCUG 56034 / CIP 105152 / NBRC 16084 / F199).